A 622-amino-acid chain; its full sequence is Membrane protein insertase YidC (622 aa).

A helical membrane pass occupies residues Phe-6–Leu-26. The disordered stretch occupies residues Ala-37–Ser-71. The next 4 helical transmembrane spans lie at Leu-413–Phe-433, Leu-483–Phe-503, Met-513–Phe-533, and Val-579–Trp-599.

Belongs to the OXA1/ALB3/YidC family. Type 1 subfamily. Interacts with the Sec translocase complex via SecD. Specifically interacts with transmembrane segments of nascent integral membrane proteins during membrane integration.

The protein localises to the cell inner membrane. Its function is as follows. Required for the insertion and/or proper folding and/or complex formation of integral membrane proteins into the membrane. Involved in integration of membrane proteins that insert both dependently and independently of the Sec translocase complex, as well as at least some lipoproteins. Aids folding of multispanning membrane proteins. The polypeptide is Membrane protein insertase YidC (Treponema pallidum (strain Nichols)).